A 188-amino-acid polypeptide reads, in one-letter code: GTP-dependent dephospho-CoA kinase (188 aa).

5 residues coordinate GTP: aspartate 43, valine 44, aspartate 62, glutamate 121, and aspartate 144.

It belongs to the GTP-dependent DPCK family.

The catalysed reaction is 3'-dephospho-CoA + GTP = GDP + CoA + H(+). It participates in cofactor biosynthesis; coenzyme A biosynthesis. Functionally, catalyzes the GTP-dependent phosphorylation of the 3'-hydroxyl group of dephosphocoenzyme A to form coenzyme A (CoA). The sequence is that of GTP-dependent dephospho-CoA kinase from Methanococcoides burtonii (strain DSM 6242 / NBRC 107633 / OCM 468 / ACE-M).